The following is a 550-amino-acid chain: Complement control protein (550 aa).

The signal sequence occupies residues 1-19 (MAFLRQTLWILWTFTMVIG). 4 consecutive Sushi domains span residues 23 to 83 (EKCS…TCNK), 84 to 150 (KSCP…FCEK), 151 to 209 (EKCH…TCEL), and 210 to 268 (AGCK…KCVL). Disulfide bonds link cysteine 25–cysteine 68, cysteine 53–cysteine 81, cysteine 86–cysteine 131, cysteine 116–cysteine 148, cysteine 153–cysteine 194, cysteine 180–cysteine 207, cysteine 212–cysteine 254, and cysteine 240–cysteine 266. Residues asparagine 63 and asparagine 111 are each glycosylated (N-linked (GlcNAc...) asparagine; by host). Asparagine 197 carries N-linked (GlcNAc...) asparagine; by host glycosylation. N-linked (GlcNAc...) asparagine; by host glycosylation is found at asparagine 255, asparagine 275, and asparagine 299. Residues 269 to 338 (EDIDDPNNSN…TSEGFNETTT (70 aa)) form a disordered region. Polar residues-rich tracts occupy residues 288 to 302 (EKPNGNVFQRSNYTE) and 312 to 321 (TAATCDTNCE). Residues asparagine 334, asparagine 371, asparagine 374, and asparagine 378 are each glycosylated (N-linked (GlcNAc...) asparagine; by host). Disordered regions lie at residues 387-408 (TPTSQDDATPSIPSVQTPNYNT) and 420-516 (IEEG…RPPA). Polar residues predominate over residues 424 to 440 (PSNSTTSEKATASTLSH). N-linked (GlcNAc...) asparagine; by host glycans are attached at residues asparagine 426, asparagine 445, asparagine 455, and asparagine 483. Residues 450–476 (IYTTLNKTTQLPSTNKPTNSQAKSSTK) show a composition bias toward polar residues. Over residues 484-495 (KTTSNPAISLTD) the composition is skewed to polar residues. The helical transmembrane segment at 528-548 (IGLLTAVALTCGLITLFHYLF) threads the bilayer.

It is found in the host membrane. Its subcellular location is the virion membrane. Functionally, inhibits the complement component of the host innate immune response. Regulates host C3 convertases, accelerating their decay, and acts as a cofactor for factor I degradation of C4b and C3b. Also binds heparin, and therefore may play two distinct roles when incorporated in virion membranes: immune evasion and host cell binding. The polypeptide is Complement control protein (ORF4) (Human herpesvirus 8 type P (isolate GK18) (HHV-8)).